Consider the following 122-residue polypeptide: Large ribosomal subunit protein uL14 (122 aa).

This sequence belongs to the universal ribosomal protein uL14 family. In terms of assembly, part of the 50S ribosomal subunit. Forms a cluster with proteins L3 and L19. In the 70S ribosome, L14 and L19 interact and together make contacts with the 16S rRNA in bridges B5 and B8.

Binds to 23S rRNA. Forms part of two intersubunit bridges in the 70S ribosome. This chain is Large ribosomal subunit protein uL14, found in Ruthia magnifica subsp. Calyptogena magnifica.